The primary structure comprises 250 residues: Green-light absorbing proteorhodopsin (250 aa).

The signal sequence occupies residues 1 to 18 (MGKLLLILGSVIALPTFA). The Extracellular portion of the chain corresponds to 19-29 (AGGGDLDASDY). The chain crosses the membrane as a helical span at residues 30-53 (TGVSFWLVTAALLASTVFFFVERD). Residues 54–58 (RVSAK) lie on the Cytoplasmic side of the membrane. A helical membrane pass occupies residues 59 to 87 (WKTSLTVSGLVTGIAFWHYMYMRGVWIET). The Extracellular portion of the chain corresponds to 88-90 (GDS). The helical transmembrane segment at 91-118 (PTVFRYIDWLLTVPLLICEFYLILAAAT) threads the bilayer. Topologically, residues 119 to 121 (NVA) are cytoplasmic. Residues 122–144 (GSLFKKLLVGSLVMLVFGYMGEA) form a helical membrane-spanning segment. Over 145–147 (GIM) the chain is Extracellular. Residues 148–177 (AAWPAFIIGCLAWVYMIYELWAGEGKSACN) traverse the membrane as a helical segment. At 178–180 (TAS) the chain is on the cytoplasmic side. A helical transmembrane segment spans residues 181–208 (PAVQSAYNTMMYIIIFGWAIYPVGYFTG). Over 209-218 (YLMGDGGSAL) the chain is Extracellular. Residues 219–249 (NLNLIYNLADFVNKILFGLIIWNVAVKESSN) traverse the membrane as a helical segment. The residue at position 232 (Lys232) is an N6-(retinylidene)lysine. Position 250 (Ala250) is a topological domain, cytoplasmic.

It belongs to the archaeal/bacterial/fungal opsin family. As to quaternary structure, homopentamer. GPR protomers assemble into a pentamer around a central pore with a C5 symmetry axis. Post-translationally, contains one covalently linked retinal chromophore per subunit.

The protein resides in the cell membrane. In terms of biological role, light-driven proton pump. This chain is Green-light absorbing proteorhodopsin, found in Unknown prokaryotic organism.